The sequence spans 530 residues: Autoinducer-2 kinase (530 aa).

This sequence belongs to the FGGY kinase family.

The protein localises to the cytoplasm. It catalyses the reaction (S)-4,5-dihydroxypentane-2,3-dione + ATP = (2S)-2-hydroxy-3,4-dioxopentyl phosphate + ADP + H(+). Its function is as follows. Catalyzes the phosphorylation of autoinducer-2 (AI-2) to phospho-AI-2, which subsequently inactivates the transcriptional regulator LsrR and leads to the transcription of the lsr operon. Phosphorylates the ring-open form of (S)-4,5-dihydroxypentane-2,3-dione (DPD), which is the precursor to all AI-2 signaling molecules, at the C5 position. This chain is Autoinducer-2 kinase, found in Yersinia pestis bv. Antiqua (strain Antiqua).